Here is a 206-residue protein sequence, read N- to C-terminus: MAEFTHLVNERRSASNFLSGHPITKEDLNEMFELVALAPSAFNLQHTKYVTVLDQDVKEKLKQAANGQYKVVSSSAVLLVLGDKQAYQQAADIYEGLKVLGILNKQEYDHMVQDTVSFYENRGEQFKRDEAIRNASLSAMMFMLSAKEKGWDTCPMIGFDAEAVKRILNIDDQFEVVMMITIGKEKTESRRPRGYRKPVNEFVEYM.

Residues 11–13, 68–70, 157–158, R193, and R196 each bind FMN; these read RRS, QYK, and IG.

It belongs to the nitroreductase family. As to quaternary structure, homodimer. Requires FMN as cofactor.

The protein localises to the cytoplasm. Its function is as follows. Putative nitroreductase that may contribute to the degradation of aromatic compounds. The protein is Putative NAD(P)H nitroreductase MhqN (mhqN) of Bacillus subtilis (strain 168).